We begin with the raw amino-acid sequence, 212 residues long: External core antigen (212 aa).

An N-terminal signal peptide occupies residues 1-19 (MQLFHLCLIISCSCPTVQA). Residues 25-27 (GWL) are HBEAG. Residues 165–212 (NAPILSTLPETTVVRRRGRSPRRRTPSPRRRRSQSPRRRRSQSPASQC) are disordered. Over residues 178-205 (VRRRGRSPRRRTPSPRRRRSQSPRRRRS) the composition is skewed to basic residues. The stretch at 184-190 (SPRRRTP) is one 1; half-length repeat. Positions 184–206 (SPRRRTPSPRRRRSQSPRRRRSQ) are 3 X 8 AA repeats of S-P-R-R-R-R-S-Q. Residues 184–212 (SPRRRTPSPRRRRSQSPRRRRSQSPASQC) constitute a propeptide that is removed on maturation. Repeat copies occupy residues 191–198 (SPRRRRSQ) and 199–206 (SPRRRRSQ).

This sequence belongs to the orthohepadnavirus precore antigen family. Homodimerizes. Post-translationally, phosphorylated. In terms of processing, cleaved by host furin.

The protein localises to the secreted. It localises to the host nucleus. May regulate immune response to the intracellular capsid in acting as a T-cell tolerogen, by having an immunoregulatory effect which prevents destruction of infected cells by cytotoxic T-cells. This immune regulation may predispose to chronicity during perinatal infections and prevent severe liver injury during adult infections. In Gibbon hepatitis B virus subtype ayw3q (isolate Hope) (HBVgbn), this protein is External core antigen.